The sequence spans 144 residues: UPF0102 protein BURPS668_3819 (144 aa).

The tract at residues 1–28 (MCHAREASLGTGEPEAAPRDNFPREAGS) is disordered. Residues 16-28 (AAPRDNFPREAGS) are compositionally biased toward basic and acidic residues.

This sequence belongs to the UPF0102 family.

This is UPF0102 protein BURPS668_3819 from Burkholderia pseudomallei (strain 668).